We begin with the raw amino-acid sequence, 546 residues long: Chaperonin GroEL (546 aa).

ATP-binding positions include 30–33 (TLGP), Lys-51, 87–91 (DGTTT), Gly-415, and Asp-496. The tract at residues 527-546 (EKKAPAGAPGGMGGMGDMDF) is disordered. A compositionally biased stretch (gly residues) spans 534 to 546 (APGGMGGMGDMDF).

Belongs to the chaperonin (HSP60) family. Forms a cylinder of 14 subunits composed of two heptameric rings stacked back-to-back. Interacts with the co-chaperonin GroES.

The protein localises to the cytoplasm. The enzyme catalyses ATP + H2O + a folded polypeptide = ADP + phosphate + an unfolded polypeptide.. Its function is as follows. Together with its co-chaperonin GroES, plays an essential role in assisting protein folding. The GroEL-GroES system forms a nano-cage that allows encapsulation of the non-native substrate proteins and provides a physical environment optimized to promote and accelerate protein folding. The protein is Chaperonin GroEL of Rhodospirillum centenum (strain ATCC 51521 / SW).